The chain runs to 501 residues: Ectoine/hydroxyectoine transporter (501 aa).

12 consecutive transmembrane segments (helical) span residues 9-29 (PVFYVSAFVVFLLVIIGATLP), 45-65 (IHFGWFYLLAVFVFVVFLITL), 86-106 (FFTWIGMLFSAGFGAGLVFWG), 137-157 (AFFHWGVSQWSVFAIVGLVIA), 190-210 (LAVIATVMGVATSLGLGILQM), 220-240 (VPTSIWVQMAIAGVMLITYLI), 258-278 (LGSLFIIIVFVFMAGPTVFIL), 311-331 (WTIFYWAWSTAWSPFVGAFIA), 343-363 (VLGVLVVSPAIACIWIAAFGG), 395-415 (LPMTTILSILSIFLIFTFLVT), 441-461 (IVWGLLITAIAVVLLLAGGLE), and 465-485 (TASLISALPFTVILLLMMASF).

The protein belongs to the BCCT transporter (TC 2.A.15) family.

It localises to the cell inner membrane. Mediates the import of ectoine and hydroxyectoine, which function as osmotic and cold stress protectants. Also has minor uptake activities for the compatible solutes proline and glycine betaine. The sequence is that of Ectoine/hydroxyectoine transporter from Virgibacillus pantothenticus.